Here is a 368-residue protein sequence, read N- to C-terminus: MTTLIPVPLGEHSYRIAIGANTRRQLPALLAAYTPLTPKAPALIVSNPQIWRHYGTDVQGALTQAGWQVTPCILPAGERYKTLRTVEKIYDAALSQRLERGSTLFALGGGVIGDMTGFAAATWLRGIAVVQIPTSLLAMVDAAIGGKTGVNHPQGKNLIGAFHQPRLVVIDPDVLATLPPREFRAGMAEVIKYGVIWDAELFHLLSQLPRLDCMGALPSEQFIQVLRRSCQAKVDVVSKDEREAGLRAILNYGHTIGHALESIGNYRLLNHGEAVAIGMIAAGELAVALGYWSAEAAAAQRALILKAKLPTTIPPHFDVEGLLALLQHDKKVQAQNVRFILPTAIGHGQICDQVPAELIRETLHRLQA.

Residues 110–114 (GVIGD), 134–135 (TS), lysine 147, and lysine 156 each bind NAD(+). Residues glutamate 189, histidine 254, and histidine 271 each coordinate Zn(2+).

Belongs to the sugar phosphate cyclases superfamily. Dehydroquinate synthase family. The cofactor is NAD(+). Co(2+) is required as a cofactor. Requires Zn(2+) as cofactor.

The protein localises to the cytoplasm. The enzyme catalyses 7-phospho-2-dehydro-3-deoxy-D-arabino-heptonate = 3-dehydroquinate + phosphate. It functions in the pathway metabolic intermediate biosynthesis; chorismate biosynthesis; chorismate from D-erythrose 4-phosphate and phosphoenolpyruvate: step 2/7. Functionally, catalyzes the conversion of 3-deoxy-D-arabino-heptulosonate 7-phosphate (DAHP) to dehydroquinate (DHQ). This is 3-dehydroquinate synthase from Thermosynechococcus vestitus (strain NIES-2133 / IAM M-273 / BP-1).